The chain runs to 189 residues: Elongation factor P (189 aa).

Belongs to the elongation factor P family.

It is found in the cytoplasm. It participates in protein biosynthesis; polypeptide chain elongation. Its function is as follows. Involved in peptide bond synthesis. Stimulates efficient translation and peptide-bond synthesis on native or reconstituted 70S ribosomes in vitro. Probably functions indirectly by altering the affinity of the ribosome for aminoacyl-tRNA, thus increasing their reactivity as acceptors for peptidyl transferase. This Campylobacter lari (strain RM2100 / D67 / ATCC BAA-1060) protein is Elongation factor P.